The following is a 315-amino-acid chain: MSGAATTEGAVTRFDAALVGTEARDWFALLKPRVISLVVFTGAAGLAMAPGPINPLIAAVSILCICMASGAAGAINMWYDRDIDAVMTRTARRPIPDGRIRDDQALGFGIGLSVASVLLMWLAANALAAFILAFSIFFYAVIYTMWLKRSTPQNIVIGGAAGAFPPMIGWAATTGSLGVLPVVMFAIVFLWTPPHFWSLSLYACKDYGRAGIPMLPVVRGARHTRWQILFYTLILSAVSLVPSFLHQAGWLYTGVASLLDAGFVACAVGVLTDRQDEAGVSLTGDRPARRAFRYSLAYLFLLFCGLLADHFLIMR.

9 consecutive transmembrane segments (helical) span residues 34-54, 55-75, 105-125, 127-147, 155-175, 177-197, 226-246, 251-271, and 294-314; these read VISL…GPIN, PLIA…AGAI, ALGF…LAAN, LAAF…TMWL, IVIG…ATTG, LGVL…PHFW, WQIL…SFLH, LYTG…VGVL, and YSLA…FLIM.

Belongs to the UbiA prenyltransferase family. Protoheme IX farnesyltransferase subfamily.

The protein resides in the cell inner membrane. It carries out the reaction heme b + (2E,6E)-farnesyl diphosphate + H2O = Fe(II)-heme o + diphosphate. The protein operates within porphyrin-containing compound metabolism; heme O biosynthesis; heme O from protoheme: step 1/1. In terms of biological role, converts heme B (protoheme IX) to heme O by substitution of the vinyl group on carbon 2 of heme B porphyrin ring with a hydroxyethyl farnesyl side group. The sequence is that of Protoheme IX farnesyltransferase from Gluconacetobacter diazotrophicus (strain ATCC 49037 / DSM 5601 / CCUG 37298 / CIP 103539 / LMG 7603 / PAl5).